The sequence spans 509 residues: Glycogen synthase (509 aa).

ADP-alpha-D-glucose is bound at residue Lys47.

This sequence belongs to the glycosyltransferase 1 family. Bacterial/plant glycogen synthase subfamily.

The catalysed reaction is [(1-&gt;4)-alpha-D-glucosyl](n) + ADP-alpha-D-glucose = [(1-&gt;4)-alpha-D-glucosyl](n+1) + ADP + H(+). The protein operates within glycan biosynthesis; glycogen biosynthesis. Functionally, synthesizes alpha-1,4-glucan chains using ADP-glucose. The polypeptide is Glycogen synthase (Xanthomonas oryzae pv. oryzae (strain MAFF 311018)).